Reading from the N-terminus, the 407-residue chain is Phosphopentomutase (407 aa).

Residues aspartate 10, aspartate 306, histidine 311, aspartate 347, histidine 348, and histidine 359 each coordinate Mn(2+).

Belongs to the phosphopentomutase family. The cofactor is Mn(2+).

It is found in the cytoplasm. The enzyme catalyses 2-deoxy-alpha-D-ribose 1-phosphate = 2-deoxy-D-ribose 5-phosphate. It catalyses the reaction alpha-D-ribose 1-phosphate = D-ribose 5-phosphate. Its pathway is carbohydrate degradation; 2-deoxy-D-ribose 1-phosphate degradation; D-glyceraldehyde 3-phosphate and acetaldehyde from 2-deoxy-alpha-D-ribose 1-phosphate: step 1/2. Its function is as follows. Isomerase that catalyzes the conversion of deoxy-ribose 1-phosphate (dRib-1-P) and ribose 1-phosphate (Rib-1-P) to deoxy-ribose 5-phosphate (dRib-5-P) and ribose 5-phosphate (Rib-5-P), respectively. This Salmonella dublin (strain CT_02021853) protein is Phosphopentomutase.